The sequence spans 412 residues: L-cysteine:1D-myo-inositol 2-amino-2-deoxy-alpha-D-glucopyranoside ligase (412 aa).

C43 contacts Zn(2+). L-cysteinyl-5'-AMP contacts are provided by residues 43-46 (CGIT), T58, and 81-83 (NVT). Residues 45-55 (ITPYDATHLGH) carry the 'HIGH' region motif. The short motif at 186-191 (ERGGDP) is the 'ERGGDP' region element. W227 lines the L-cysteinyl-5'-AMP pocket. C231 provides a ligand contact to Zn(2+). 249-251 (GND) contributes to the L-cysteinyl-5'-AMP binding site. H256 provides a ligand contact to Zn(2+). I283 contributes to the L-cysteinyl-5'-AMP binding site. The 'KMSKS' region signature appears at 289 to 293 (KMSKS).

This sequence belongs to the class-I aminoacyl-tRNA synthetase family. MshC subfamily. In terms of assembly, monomer. The cofactor is Zn(2+).

It carries out the reaction 1D-myo-inositol 2-amino-2-deoxy-alpha-D-glucopyranoside + L-cysteine + ATP = 1D-myo-inositol 2-(L-cysteinylamino)-2-deoxy-alpha-D-glucopyranoside + AMP + diphosphate + H(+). In terms of biological role, catalyzes the ATP-dependent condensation of GlcN-Ins and L-cysteine to form L-Cys-GlcN-Ins. This is L-cysteine:1D-myo-inositol 2-amino-2-deoxy-alpha-D-glucopyranoside ligase from Salinispora arenicola (strain CNS-205).